The sequence spans 729 residues: Fatty acid oxidation complex subunit alpha (729 aa).

Positions M1–K189 are enoyl-CoA hydratase/isomerase. D296 lines the substrate pocket. Residues E311–A729 form a 3-hydroxyacyl-CoA dehydrogenase region. NAD(+)-binding positions include M324, D343, I400–E402, K407, and S429. The active-site For 3-hydroxyacyl-CoA dehydrogenase activity is H450. Position 453 (N453) interacts with NAD(+). The substrate site is built by N500 and Y660. The tract at residues R708–A729 is disordered.

The protein in the N-terminal section; belongs to the enoyl-CoA hydratase/isomerase family. This sequence in the C-terminal section; belongs to the 3-hydroxyacyl-CoA dehydrogenase family. As to quaternary structure, heterotetramer of two alpha chains (FadB) and two beta chains (FadA).

It catalyses the reaction a (3S)-3-hydroxyacyl-CoA + NAD(+) = a 3-oxoacyl-CoA + NADH + H(+). The catalysed reaction is a (3S)-3-hydroxyacyl-CoA = a (2E)-enoyl-CoA + H2O. The enzyme catalyses a 4-saturated-(3S)-3-hydroxyacyl-CoA = a (3E)-enoyl-CoA + H2O. It carries out the reaction (3S)-3-hydroxybutanoyl-CoA = (3R)-3-hydroxybutanoyl-CoA. It catalyses the reaction a (3Z)-enoyl-CoA = a 4-saturated (2E)-enoyl-CoA. The catalysed reaction is a (3E)-enoyl-CoA = a 4-saturated (2E)-enoyl-CoA. It participates in lipid metabolism; fatty acid beta-oxidation. In terms of biological role, involved in the aerobic and anaerobic degradation of long-chain fatty acids via beta-oxidation cycle. Catalyzes the formation of 3-oxoacyl-CoA from enoyl-CoA via L-3-hydroxyacyl-CoA. It can also use D-3-hydroxyacyl-CoA and cis-3-enoyl-CoA as substrate. In Escherichia coli O157:H7, this protein is Fatty acid oxidation complex subunit alpha.